We begin with the raw amino-acid sequence, 182 residues long: tRNA-splicing endonuclease (182 aa).

Catalysis depends on residues Tyr-119, His-127, and Lys-158.

This sequence belongs to the tRNA-intron endonuclease family. Archaeal short subfamily. In terms of assembly, homotetramer; although the tetramer contains four active sites, only two participate in the cleavage. Therefore, it should be considered as a dimer of dimers.

It catalyses the reaction pretRNA = a 3'-half-tRNA molecule with a 5'-OH end + a 5'-half-tRNA molecule with a 2',3'-cyclic phosphate end + an intron with a 2',3'-cyclic phosphate and a 5'-hydroxyl terminus.. In terms of biological role, endonuclease that removes tRNA introns. Cleaves pre-tRNA at the 5'- and 3'-splice sites to release the intron. The products are an intron and two tRNA half-molecules bearing 2',3' cyclic phosphate and 5'-OH termini. Recognizes a pseudosymmetric substrate in which 2 bulged loops of 3 bases are separated by a stem of 4 bp. The sequence is that of tRNA-splicing endonuclease from Saccharolobus islandicus (strain M.16.27) (Sulfolobus islandicus).